Here is a 418-residue protein sequence, read N- to C-terminus: Serine hydroxymethyltransferase (418 aa).

(6S)-5,6,7,8-tetrahydrofolate-binding positions include Leu121 and 125 to 127; that span reads GHL. Residue Lys230 is modified to N6-(pyridoxal phosphate)lysine. 355–357 serves as a coordination point for (6S)-5,6,7,8-tetrahydrofolate; sequence SPF.

The protein belongs to the SHMT family. Homodimer. The cofactor is pyridoxal 5'-phosphate.

The protein resides in the cytoplasm. It catalyses the reaction (6R)-5,10-methylene-5,6,7,8-tetrahydrofolate + glycine + H2O = (6S)-5,6,7,8-tetrahydrofolate + L-serine. It participates in one-carbon metabolism; tetrahydrofolate interconversion. Its pathway is amino-acid biosynthesis; glycine biosynthesis; glycine from L-serine: step 1/1. Its function is as follows. Catalyzes the reversible interconversion of serine and glycine with tetrahydrofolate (THF) serving as the one-carbon carrier. This reaction serves as the major source of one-carbon groups required for the biosynthesis of purines, thymidylate, methionine, and other important biomolecules. Also exhibits THF-independent aldolase activity toward beta-hydroxyamino acids, producing glycine and aldehydes, via a retro-aldol mechanism. This chain is Serine hydroxymethyltransferase, found in Streptococcus agalactiae serotype V (strain ATCC BAA-611 / 2603 V/R).